The following is a 140-amino-acid chain: MKKTIMTRFGEVEFDPENTVLFVDGLIGFENLRDFIVMPNRKNGPLFWIQSVEEPDLAFVLTDPTNFFLDYKVVPDARERAKLGIGTDDDCHALAVVTVPPDRKVTLNLMAPVLFAPATNRAIQVVLEKSQYKTRHPLPA.

It belongs to the FliW family. Interacts with translational regulator CsrA and flagellin(s).

The protein resides in the cytoplasm. Functionally, acts as an anti-CsrA protein, binds CsrA and prevents it from repressing translation of its target genes, one of which is flagellin. Binds to flagellin and participates in the assembly of the flagellum. The sequence is that of Flagellar assembly factor FliW from Syntrophotalea carbinolica (strain DSM 2380 / NBRC 103641 / GraBd1) (Pelobacter carbinolicus).